A 3095-amino-acid chain; its full sequence is Centrosome-associated protein 350 (3095 aa).

Disordered stretches follow at residues 1 to 24 (MRSS…ETIQ) and 63 to 105 (TKKS…RSPL). The segment covering 14-24 (PRNSQSKETIQ) has biased composition (polar residues). Residues serine 84 and serine 140 each carry the phosphoserine modification. Disordered regions lie at residues 219–239 (DEMP…LNNM), 251–272 (SDSS…KRQQ), and 430–493 (KILG…RAWS). A compositionally biased stretch (polar residues) spans 228 to 238 (SENNSKPSLNN). Positions 251 to 265 (SDSSPSSSACNSQRS) are enriched in low complexity. Basic and acidic residues-rich tracts occupy residues 438 to 457 (MEQK…ERVA) and 464 to 476 (GRAE…DVSH). The residue at position 468 (serine 468) is a Phosphoserine. Residues 481 to 491 (RSSARSRSSRA) are compositionally biased toward low complexity. Serine 503 is subject to Phosphoserine. Disordered stretches follow at residues 538-623 (QAVR…QKNK) and 671-718 (ARQH…PPQP). 2 stretches are compositionally biased toward basic and acidic residues: residues 587-623 (YDTD…QKNK) and 690-699 (ESDKENKIQE). Residues 596-641 (IVRQQEERRRRQHEEKKAQKEATEQKNKRLQELYRRQREAFSKAKT) are a coiled coil. Serine 691 is modified (phosphoserine). The span at 701 to 714 (PPSASSSSDLSLSE) shows a compositional bias: low complexity. Serine 874 and serine 935 each carry phosphoserine. A disordered region spans residues 977–996 (SVSEGPLLSEGSLSEEEERR). Positions 979-988 (SEGPLLSEGS) are enriched in low complexity. Serine 1057 carries the post-translational modification Phosphoserine. 2 disordered regions span residues 1099–1128 (YEDD…GSSL) and 1151–1265 (QHSS…SQKL). Residues 1119-1128 (LESQVDGSSL) are compositionally biased toward polar residues. Residues 1153 to 1168 (SSGARSAGSTRSSSAS) are compositionally biased toward low complexity. Over residues 1194 to 1206 (DEEKVQSDSERGS) the composition is skewed to basic and acidic residues. Phosphoserine is present on serine 1200. A compositionally biased stretch (low complexity) spans 1251–1265 (QKTPTSPLSPSSQKL). The residue at position 1253 (threonine 1253) is a Phosphothreonine. 2 positions are modified to phosphoserine: serine 1256 and serine 1259. Residues 1363 to 1402 (IKAQQQRHERDLALLKLKAEQEALECQRQLEETRNKTAQV) are a coiled coil. 4 disordered regions span residues 1490–1668 (AETD…GQDS), 1720–1739 (LRDK…QRGL), 1787–1864 (KLKS…QRRQ), and 1893–2017 (AWDK…PVKS). The span at 1503–1513 (QSKEGAVDSKR) shows a compositional bias: basic and acidic residues. 2 stretches are compositionally biased toward low complexity: residues 1517–1526 (SPSRDSYSES) and 1536–1545 (SSGSSRQDSP). The span at 1551 to 1564 (KENEKPFHGEKMES) shows a compositional bias: basic and acidic residues. The residue at position 1606 (serine 1606) is a Phosphoserine. The segment covering 1624-1640 (ESHRRFNMEKKRGHHDD) has biased composition (basic and acidic residues). Serine 1641 and serine 1646 each carry phosphoserine. The stretch at 1700–1793 (KALKEKTKAE…LQEKLKSAGE (94 aa)) forms a coiled coil. Residues 1787-1796 (KLKSAGEKKL) show a composition bias toward basic and acidic residues. Serine 1812 is modified (phosphoserine). The span at 1819–1835 (ETRSPSPISISSSETSS) shows a compositional bias: low complexity. Basic and acidic residues-rich tracts occupy residues 1845–1864 (SRMD…QRRQ) and 1894–1915 (WDKE…RTEQ). Residues 1850–1893 (KFLTKREQKLMQRRQHAEELLEWKRRLDAEEAEIQQMEKQALAA) are a coiled coil. Serine 1930 carries the post-translational modification Phosphoserine. The segment covering 1980–1994 (STSPSKHSPPKSCLS) has biased composition (low complexity). Positions 1999–2011 (ESSKASHRTEGHC) are enriched in basic and acidic residues. Residues 2043–2092 (IEGRIRALKDELRKRKSVVEQLKREQRKRQKERLKAQEASLLRQLETYDE) are a coiled coil. Position 2108 is a phosphoserine (serine 2108). Disordered regions lie at residues 2116 to 2155 (KTLS…GSLA), 2191 to 2265 (IEHL…VEDA), 2286 to 2427 (LSSK…EISE), and 2440 to 2471 (VHSE…GGTE). Over residues 2133–2151 (HRSETAKTWKSVTESERSR) the composition is skewed to basic and acidic residues. Serine 2198 is subject to Phosphoserine. Basic and acidic residues-rich tracts occupy residues 2202–2214 (SSRK…RDSL) and 2227–2259 (NAPD…KLES). Polar residues predominate over residues 2286–2300 (LSSKELPSDSANVQQ). Over residues 2301 to 2331 (DLDKPATETSHEKEEALKEDQSNHSTDDRSP) the composition is skewed to basic and acidic residues. Over residues 2349–2362 (DSTCSGQLSVPKES) the composition is skewed to polar residues. Basic and acidic residues-rich tracts occupy residues 2377–2387 (ISADEISKDDS) and 2395–2407 (LRKD…DRSQ). A compositionally biased stretch (low complexity) spans 2409-2420 (TRSSRSRATGSG). Serine 2421 and serine 2450 each carry phosphoserine. Basic and acidic residues predominate over residues 2455–2465 (MKSKERSDVGH). In terms of domain architecture, CAP-Gly spans 2504 to 2546 (GETDFAKGFWAGVELDKPEGNNNGTYDGIVYFVCKDKHGIFAP). Threonine 2671 carries the phosphothreonine modification. Positions 2700 to 2731 (LLDLLTREKNQLEAQLKSSISEEKKSKQQLET) form a coiled coil. Residues 2767 to 2793 (QEFLDQKKVPPQDLPQNTEEQSPSVPS) form a disordered region. Polar residues predominate over residues 2780 to 2791 (LPQNTEEQSPSV). Serine 2809 and serine 2818 each carry phosphoserine.

Part of a ternary complex that contains CEP350, CEP43 and MAPRE1. Interacts (via C-terminus) directly with CEP43 (via N-terminus). Interacts with NR1H3, PPARA, PPARD and PPARG. Interacts directly with microtubules. Interacts with the fusion protein CEP43-FGFR1, and by doing so recruits and activates PI3K and PLC-gamma. Interacts with CYLD. Interacts with CFAP157. Interacts with CEP19 (via C-terminus). Interacts with CEP78; promoting CEP78 localization to centrosome and centriole. Phosphorylated during mitosis.

The protein localises to the cytoplasm. It localises to the cytoskeleton. The protein resides in the microtubule organizing center. It is found in the centrosome. Its subcellular location is the spindle. The protein localises to the nucleus. It localises to the centriole. The protein resides in the cilium basal body. In terms of biological role, plays an essential role in centriole growth by stabilizing a procentriolar seed composed of at least, SASS6 and CPAP. Required for anchoring microtubules to the centrosomes and for the integrity of the microtubule network. Recruits PPARA to discrete subcellular compartments and thereby modulates PPARA activity. Required for ciliation. In Mus musculus (Mouse), this protein is Centrosome-associated protein 350.